The following is a 351-amino-acid chain: Heat-inducible transcription repressor HrcA (351 aa).

It belongs to the HrcA family.

Its function is as follows. Negative regulator of class I heat shock genes (grpE-dnaK-dnaJ and groELS operons). Prevents heat-shock induction of these operons. This is Heat-inducible transcription repressor HrcA from Fusobacterium nucleatum subsp. nucleatum (strain ATCC 25586 / DSM 15643 / BCRC 10681 / CIP 101130 / JCM 8532 / KCTC 2640 / LMG 13131 / VPI 4355).